We begin with the raw amino-acid sequence, 249 residues long: Coproheme decarboxylase (249 aa).

Fe-coproporphyrin III-binding positions include Arg131, Tyr145–Lys149, His172, Gln185, and Ser223. The active site involves Tyr145.

This sequence belongs to the ChdC family. Type 1 subfamily. It depends on Fe-coproporphyrin III as a cofactor.

It catalyses the reaction Fe-coproporphyrin III + 2 H2O2 + 2 H(+) = heme b + 2 CO2 + 4 H2O. It carries out the reaction Fe-coproporphyrin III + H2O2 + H(+) = harderoheme III + CO2 + 2 H2O. The catalysed reaction is harderoheme III + H2O2 + H(+) = heme b + CO2 + 2 H2O. Its pathway is porphyrin-containing compound metabolism; protoheme biosynthesis. In terms of biological role, involved in coproporphyrin-dependent heme b biosynthesis. Catalyzes the decarboxylation of Fe-coproporphyrin III (coproheme) to heme b (protoheme IX), the last step of the pathway. The reaction occurs in a stepwise manner with a three-propionate intermediate. This chain is Coproheme decarboxylase, found in Shouchella clausii (strain KSM-K16) (Alkalihalobacillus clausii).